Consider the following 375-residue polypeptide: MAKMINKTLVLTYIYLLIYIILSSGVILYNKWVLSPKYFNFPLPITLTMIHMGFAGFVAFLLIRVFKVVAPVKMTFEIYATCVVPISAFFASSLWFGNTAYLHISVAFIQMLKALMPVATFIMAVVCGTDKPRCDVFSNMLLVSVGVVISSYGEIHFNIVGTVYQVTGIFAEALRLVLTQVLLQKKGLTLNPITSLYYIAPCSFVFLALPWYVLEKPTMEVSQIQFNFWIFFSNALCALALNFSIFLVIGRTGAVTIRVAGVLKDWILIALSTVIFPESTITGLNITGYAIALCGVVMYNYIKVRDVKASQPTADSLPDRINKEYKMEKKSSDKFNPNDSVEIPRVGGEVNDEEAPLITSRLSHIGRTQLGNHAA.

The next 10 helical transmembrane spans lie at 9 to 29 (LVLTYIYLLIYIILSSGVILY), 43 to 63 (LPITLTMIHMGFAGFVAFLLI), 76 to 96 (FEIYATCVVPISAFFASSLWF), 106 to 126 (VAFIQMLKALMPVATFIMAVV), 140 to 160 (MLLVSVGVVISSYGEIHFNIV), 163 to 183 (VYQVTGIFAEALRLVLTQVLL), 193 to 213 (ITSLYYIAPCSFVFLALPWYV), 229 to 249 (WIFFSNALCALALNFSIFLVI), 257 to 276 (IRVAGVLKDWILIALSTVIF), and 280 to 302 (TITGLNITGYAIALCGVVMYNYI). A disordered region spans residues 328–348 (EKKSSDKFNPNDSVEIPRVGG).

Belongs to the TPT transporter family. TPT (TC 2.A.7.9) subfamily.

The protein localises to the membrane. The protein is Probable sugar phosphate/phosphate translocator At3g17430 of Arabidopsis thaliana (Mouse-ear cress).